Reading from the N-terminus, the 223-residue chain is uncharacterized protein (223 aa).

Residues 1–12 constitute a mitochondrion transit peptide; sequence MFRSLVRKTTPL.

The protein resides in the mitochondrion. This is an uncharacterized protein from Candida albicans (strain WO-1) (Yeast).